We begin with the raw amino-acid sequence, 502 residues long: L-amino-acid oxidase BmooLAAO-I (502 aa).

An N-terminal signal peptide occupies residues 1-18; that stretch reads MNVFFTFSLLFLAALGSC. C28 and C191 are oxidised to a cystine. Residues 61–62, 81–82, R89, and 105–108 contribute to the FAD site; these read MS, EA, and GPMR. Residue R108 coordinates substrate. N-linked (GlcNAc...) asparagine glycosylation occurs at N190. H241 is a binding site for substrate. V279 contacts FAD. The cysteines at positions 349 and 430 are disulfide-linked. Y390 lines the substrate pocket. FAD is bound by residues E475 and 482–487; that span reads GWIDST. 482-483 is a binding site for substrate; sequence GW.

It belongs to the flavin monoamine oxidase family. FIG1 subfamily. Homodimer; non-covalently linked. FAD serves as cofactor. N-glycosylated. The enzymatic activity is not affected by deglycosylation. As to expression, expressed by the venom gland.

The protein resides in the secreted. It carries out the reaction an L-alpha-amino acid + O2 + H2O = a 2-oxocarboxylate + H2O2 + NH4(+). It catalyses the reaction L-leucine + O2 + H2O = 4-methyl-2-oxopentanoate + H2O2 + NH4(+). The enzyme catalyses L-phenylalanine + O2 + H2O = 3-phenylpyruvate + H2O2 + NH4(+). The catalysed reaction is L-tryptophan + O2 + H2O = indole-3-pyruvate + H2O2 + NH4(+). It carries out the reaction L-methionine + O2 + H2O = 4-methylsulfanyl-2-oxobutanoate + H2O2 + NH4(+). It catalyses the reaction L-isoleucine + O2 + H2O = (S)-3-methyl-2-oxopentanoate + H2O2 + NH4(+). The enzyme catalyses L-histidine + O2 + H2O = 3-(imidazol-5-yl)pyruvate + H2O2 + NH4(+). The catalysed reaction is L-tyrosine + O2 + H2O = 3-(4-hydroxyphenyl)pyruvate + H2O2 + NH4(+). It carries out the reaction L-alanine + O2 + H2O = pyruvate + H2O2 + NH4(+). It catalyses the reaction L-valine + O2 + H2O = 3-methyl-2-oxobutanoate + H2O2 + NH4(+). With respect to regulation, its enzymatic activities is reduced when it is exposed to Ca(2+), Zn(2+), Al(3+), Cu(2+) or Ni(2+) salts. Catalyzes an oxidative deamination of predominantly hydrophobic and aromatic L-amino acids, thus producing hydrogen peroxide that may contribute to the toxicity of the venom. Shows very high activity on L-Met, and L-Leu, high activity on L-Ile, L-Phe and L-Tyr and moderate activity on L-His, L-Val and L-Ala. Exhibits diverse biological activities, such as edema, apoptosis of tumor cell lines, antibacterial activities against both Gram-positive and Gram-negative bacteria, as well as induction of platelet aggregation. Effects of snake L-amino oxidases on platelets are controversial, since they either induce aggregation or inhibit agonist-induced aggregation. These different effects are probably due to different experimental conditions. Unlike other snake venom L-amino acid oxidases, does not induce hemorrhage. It may also induce hemolysis. Has parasiticidal activities against and leishmania, as a result of enzyme-catalyzed hydrogen peroxide production. The protein is L-amino-acid oxidase BmooLAAO-I of Bothrops moojeni (Lance-headed viper).